Here is a 276-residue protein sequence, read N- to C-terminus: Large ribosomal subunit protein uL2 (276 aa).

The tract at residues 222–276 (GVAMNPIDHPLGGGEGRSSGGRHPVSPWGMPTKGYKTRDRKKASSKLIIKRRGQK) is disordered. The segment covering 259 to 276 (RDRKKASSKLIIKRRGQK) has biased composition (basic residues).

It belongs to the universal ribosomal protein uL2 family. As to quaternary structure, part of the 50S ribosomal subunit. Forms a bridge to the 30S subunit in the 70S ribosome.

One of the primary rRNA binding proteins. Required for association of the 30S and 50S subunits to form the 70S ribosome, for tRNA binding and peptide bond formation. It has been suggested to have peptidyltransferase activity; this is somewhat controversial. Makes several contacts with the 16S rRNA in the 70S ribosome. The sequence is that of Large ribosomal subunit protein uL2 from Nitratidesulfovibrio vulgaris (strain ATCC 29579 / DSM 644 / CCUG 34227 / NCIMB 8303 / VKM B-1760 / Hildenborough) (Desulfovibrio vulgaris).